A 445-amino-acid polypeptide reads, in one-letter code: 3-phosphoshikimate 1-carboxyvinyltransferase (445 aa).

The interval 1–20 is disordered; the sequence is MSTSAAPTPLESRASGPLSG. The 3-phosphoshikimate site is built by lysine 28, serine 29, and arginine 33. Lysine 28 lines the phosphoenolpyruvate pocket. Phosphoenolpyruvate contacts are provided by glycine 101 and arginine 129. 3-phosphoshikimate-binding residues include serine 175, glutamine 177, aspartate 328, and lysine 355. Phosphoenolpyruvate is bound at residue glutamine 177. Aspartate 328 acts as the Proton acceptor in catalysis. The phosphoenolpyruvate site is built by arginine 359 and arginine 402.

Belongs to the EPSP synthase family. As to quaternary structure, monomer.

It is found in the cytoplasm. The enzyme catalyses 3-phosphoshikimate + phosphoenolpyruvate = 5-O-(1-carboxyvinyl)-3-phosphoshikimate + phosphate. Its pathway is metabolic intermediate biosynthesis; chorismate biosynthesis; chorismate from D-erythrose 4-phosphate and phosphoenolpyruvate: step 6/7. Functionally, catalyzes the transfer of the enolpyruvyl moiety of phosphoenolpyruvate (PEP) to the 5-hydroxyl of shikimate-3-phosphate (S3P) to produce enolpyruvyl shikimate-3-phosphate and inorganic phosphate. The polypeptide is 3-phosphoshikimate 1-carboxyvinyltransferase (Bradyrhizobium sp. (strain ORS 278)).